The sequence spans 294 residues: Gap junction delta-3 protein (294 aa).

The Cytoplasmic segment spans residues Met1–Leu24. The helical transmembrane segment at Trp25–Phe45 threads the bilayer. Over Glu46–Arg76 the chain is Extracellular. The helical transmembrane segment at Phe77–Met97 threads the bilayer. Over His98–Tyr136 the chain is Cytoplasmic. Residues Leu137–Leu157 traverse the membrane as a helical segment. Residues Tyr158 to Thr188 are Extracellular-facing. The chain crosses the membrane as a helical span at residues Val189 to Leu209. Topologically, residues Gly210–Ile294 are cytoplasmic. A disordered region spans residues Glu233 to Ile294. Pro residues predominate over residues Leu238–Leu250.

The protein belongs to the connexin family. Delta-type subfamily. In terms of assembly, a connexon is composed of a hexamer of connexins. Interacts with TJP1. As to expression, expressed in vascular smooth muscle cells. Found in heart, colon, and artery (at protein level). Found in cerebral cortex, heart, liver, lung, kidney, spleen and testis.

The protein localises to the cell membrane. The protein resides in the cell junction. It localises to the gap junction. One gap junction consists of a cluster of closely packed pairs of transmembrane channels, the connexons, through which materials of low MW diffuse from one cell to a neighboring cell. This Homo sapiens (Human) protein is Gap junction delta-3 protein (GJD3).